The chain runs to 256 residues: Probable serine/threonine-protein kinase YbdM (256 aa).

One can recognise a Protein kinase domain in the interval 25–256 (YKIEECLGMG…DLNRAIQSVT (232 aa)). ATP-binding positions include 31 to 39 (LGMGGYGLV) and K54. The active-site Proton acceptor is the D149.

Belongs to the protein kinase superfamily. Ser/Thr protein kinase family.

The catalysed reaction is L-seryl-[protein] + ATP = O-phospho-L-seryl-[protein] + ADP + H(+). It carries out the reaction L-threonyl-[protein] + ATP = O-phospho-L-threonyl-[protein] + ADP + H(+). This Bacillus subtilis (strain 168) protein is Probable serine/threonine-protein kinase YbdM (ybdM).